Consider the following 427-residue polypeptide: Glutamate-1-semialdehyde 2,1-aminomutase (427 aa).

The residue at position 267 (Lys267) is an N6-(pyridoxal phosphate)lysine.

The protein belongs to the class-III pyridoxal-phosphate-dependent aminotransferase family. HemL subfamily. In terms of assembly, homodimer. Requires pyridoxal 5'-phosphate as cofactor.

It is found in the cytoplasm. The catalysed reaction is (S)-4-amino-5-oxopentanoate = 5-aminolevulinate. It functions in the pathway porphyrin-containing compound metabolism; protoporphyrin-IX biosynthesis; 5-aminolevulinate from L-glutamyl-tRNA(Glu): step 2/2. This is Glutamate-1-semialdehyde 2,1-aminomutase from Sulfurihydrogenibium azorense (strain DSM 15241 / OCM 825 / Az-Fu1).